Consider the following 450-residue polypeptide: uncharacterized protein (450 aa).

Positions 141 to 151 (WLDKTDGEKNS) are enriched in basic and acidic residues. 3 disordered regions span residues 141–171 (WLDK…DSAG), 276–298 (LQDS…AVSQ), and 395–416 (DDED…LSRN). A compositionally biased stretch (polar residues) spans 152-171 (EASSTDNSLENSTKGADSAG). Residues 283–298 (QGDKGEKESKDDAVSQ) show a composition bias toward basic and acidic residues. The segment covering 395–411 (DDEDEDNVDNSEGDEES) has biased composition (acidic residues).

This is an uncharacterized protein from Saccharomyces cerevisiae (strain ATCC 204508 / S288c) (Baker's yeast).